Here is a 340-residue protein sequence, read N- to C-terminus: GTP 3',8-cyclase (340 aa).

The Radical SAM core domain maps to 8–227 (KLGRPIRDLR…SMIQEEFDIE (220 aa)). Arg17 serves as a coordination point for GTP. Cys24 and Cys28 together coordinate [4Fe-4S] cluster. Tyr30 contacts S-adenosyl-L-methionine. Cys31 lines the [4Fe-4S] cluster pocket. Arg71 contacts GTP. Gly75 provides a ligand contact to S-adenosyl-L-methionine. Thr102 contributes to the GTP binding site. An S-adenosyl-L-methionine-binding site is contributed by Ser126. Residue Lys163 participates in GTP binding. Met197 serves as a coordination point for S-adenosyl-L-methionine. Residues Cys261 and Cys264 each contribute to the [4Fe-4S] cluster site. GTP is bound at residue 266 to 268 (RAR). Cys278 contributes to the [4Fe-4S] cluster binding site.

This sequence belongs to the radical SAM superfamily. MoaA family. In terms of assembly, monomer and homodimer. [4Fe-4S] cluster is required as a cofactor.

It carries out the reaction GTP + AH2 + S-adenosyl-L-methionine = (8S)-3',8-cyclo-7,8-dihydroguanosine 5'-triphosphate + 5'-deoxyadenosine + L-methionine + A + H(+). The protein operates within cofactor biosynthesis; molybdopterin biosynthesis. Its function is as follows. Catalyzes the cyclization of GTP to (8S)-3',8-cyclo-7,8-dihydroguanosine 5'-triphosphate. This chain is GTP 3',8-cyclase, found in Staphylococcus carnosus (strain TM300).